The primary structure comprises 384 residues: MTEGVGLPLWLLAELTYRCPLQCPYCSNPLDYAQHKNELTTQEWFDVFDQARQMGAVQLGFSGGEPLVRQDLEQLVAHAHQLGFYTNLITSGMGLTEQRISHLKQAGLDHIQISFQASDPVVNDALAGSKHAFEQKYEMCRLVKKYDYPMVLNFVIHRHNIDQIDKIIELCLELNADTVELAICQFYGWAFLNRQGLLPTQEQLIRAERITNEYREKLKAQNHPCKLIFVVPDYYEERPKACMNGWGKIFFTIAPDGMALPCHAARQLPISFPNVREQSLSKIWYESTGFNHFRGDAWMPEGCRSCPDKDRDFGGCRCQAYMLTGDASNADPVCGKSLYHQLIEQARAESEIDSSLGKLVFRNSRNSKQFTVQQNIPVQNIVDD.

The Radical SAM core domain maps to 5–220 (VGLPLWLLAE…TNEYREKLKA (216 aa)). Residues Cys-19, Cys-23, and Cys-26 each contribute to the [4Fe-4S] cluster site.

It belongs to the radical SAM superfamily. PqqE family. As to quaternary structure, interacts with PqqD. The interaction is necessary for activity of PqqE. It depends on [4Fe-4S] cluster as a cofactor.

The catalysed reaction is [PQQ precursor protein] + S-adenosyl-L-methionine = E-Y cross-linked-[PQQ precursor protein] + 5'-deoxyadenosine + L-methionine + H(+). The protein operates within cofactor biosynthesis; pyrroloquinoline quinone biosynthesis. Catalyzes the cross-linking of a glutamate residue and a tyrosine residue in the PqqA protein as part of the biosynthesis of pyrroloquinoline quinone (PQQ). This chain is PqqA peptide cyclase, found in Acinetobacter baumannii (strain ACICU).